The sequence spans 421 residues: Phosphoribosylamine--glycine ligase (421 aa).

In terms of domain architecture, ATP-grasp spans 108 to 314 (KEIMVKYNVP…FAQNIDDIMM (207 aa)). Residue 134–195 (IEEQGAPIVV…EEFLDGEEFS (62 aa)) participates in ATP binding. Glu-284 and Asn-286 together coordinate Mg(2+).

Belongs to the GARS family. Requires Mg(2+) as cofactor. Mn(2+) serves as cofactor.

The catalysed reaction is 5-phospho-beta-D-ribosylamine + glycine + ATP = N(1)-(5-phospho-beta-D-ribosyl)glycinamide + ADP + phosphate + H(+). The protein operates within purine metabolism; IMP biosynthesis via de novo pathway; N(1)-(5-phospho-D-ribosyl)glycinamide from 5-phospho-alpha-D-ribose 1-diphosphate: step 2/2. The protein is Phosphoribosylamine--glycine ligase of Streptococcus pyogenes serotype M6 (strain ATCC BAA-946 / MGAS10394).